Consider the following 686-residue polypeptide: Rhophilin-2 (686 aa).

Positions 26–100 (NPLAQTGRSK…LEGLNISVGV (75 aa)) constitute an REM-1 domain. The interaction with Rho stretch occupies residues 46-66 (QILKAVRMRTGAENLLKVATN). Positions 111-502 (PLIPLGLKET…TDFFQKLGPL (392 aa)) constitute a BRO1 domain. Residues 515–593 (RGIHFTVEEG…EEVEMKVVSL (79 aa)) enclose the PDZ domain. The residue at position 655 (Thr655) is a Phosphothreonine.

The protein belongs to the RHPN family. In terms of assembly, interacts with GTP-bound RhoA and RhoB. Interacts with both GTP- and GDP-bound RhoA. Interacts with KRT18.

Its subcellular location is the cytoplasm. The protein localises to the perinuclear region. Functionally, binds specifically to GTP-Rho. May function in a Rho pathway to limit stress fiber formation and/or increase the turnover of F-actin structures in the absence of high levels of RhoA activity. The polypeptide is Rhophilin-2 (Rhpn2) (Mus musculus (Mouse)).